A 312-amino-acid polypeptide reads, in one-letter code: Putative ring-cleaving dioxygenase MhqO (312 aa).

2 consecutive VOC domains span residues Gly7–Arg131 and Gly152–Asp269. Positions 10, 217, and 265 each coordinate Fe cation.

This sequence belongs to the extradiol ring-cleavage dioxygenase family. The cofactor is Fe(2+).

It is found in the cytoplasm. Its function is as follows. Putative ring-cleavage dioxygenase that may contribute to the degradation of aromatic compounds. This Bacillus subtilis (strain 168) protein is Putative ring-cleaving dioxygenase MhqO (mhqO).